A 373-amino-acid polypeptide reads, in one-letter code: 3-isopropylmalate dehydrogenase (373 aa).

82–93 provides a ligand contact to NAD(+); sequence GPKWGTGAVRPE. Residues R100, R110, R139, and D231 each contribute to the substrate site. Mg(2+) is bound by residues D231 and D260. 295 to 306 provides a ligand contact to NAD(+); the sequence is GSAPDLPENKVN.

Belongs to the isocitrate and isopropylmalate dehydrogenases family. As to quaternary structure, homodimer. It depends on Mg(2+) as a cofactor. Mn(2+) serves as cofactor.

It localises to the cytoplasm. The enzyme catalyses (2R,3S)-3-isopropylmalate + NAD(+) = 4-methyl-2-oxopentanoate + CO2 + NADH. It participates in amino-acid biosynthesis; L-leucine biosynthesis; L-leucine from 3-methyl-2-oxobutanoate: step 3/4. In terms of biological role, catalyzes the oxidation of 3-carboxy-2-hydroxy-4-methylpentanoate (3-isopropylmalate) to 3-carboxy-4-methyl-2-oxopentanoate. The product decarboxylates to 4-methyl-2 oxopentanoate. In Scheffersomyces stipitis (strain ATCC 58785 / CBS 6054 / NBRC 10063 / NRRL Y-11545) (Yeast), this protein is 3-isopropylmalate dehydrogenase (LEU2).